The following is a 232-amino-acid chain: Flagellar L-ring protein (232 aa).

The first 21 residues, 1 to 21 (MQKNAAHTYAISSLLVLSLTG), serve as a signal peptide directing secretion. A lipid anchor (N-palmitoyl cysteine) is attached at Cys22. Cys22 carries S-diacylglycerol cysteine lipidation.

It belongs to the FlgH family. The basal body constitutes a major portion of the flagellar organelle and consists of four rings (L,P,S, and M) mounted on a central rod.

The protein localises to the cell outer membrane. It localises to the bacterial flagellum basal body. Functionally, assembles around the rod to form the L-ring and probably protects the motor/basal body from shearing forces during rotation. This is Flagellar L-ring protein from Shigella boydii serotype 4 (strain Sb227).